A 317-amino-acid polypeptide reads, in one-letter code: Tenomodulin (317 aa).

The Cytoplasmic portion of the chain corresponds to 1–30 (MAKNPPENCEGCHILNAEALKSKKICKSLK). The chain crosses the membrane as a helical; Signal-anchor for type II membrane protein span at residues 31-50 (ICGLVFGILALTLIVLFWGS). Over 51 to 317 (KHFWPEVSKK…WWVARMLGRV (267 aa)) the chain is Extracellular. A BRICHOS domain is found at 93–186 (GNGTDETLEV…ICDNVTMYWI (94 aa)). Residue Asn94 is glycosylated (N-linked (GlcNAc...) asparagine). A disulfide bridge links Cys120 with Cys178. A glycan (N-linked (GlcNAc...) asparagine) is linked at Asn180. At Ser239 the chain carries Phosphoserine.

It belongs to the chondromodulin-1 family. As to expression, widely expressed with highest expression in tendons and ligaments, in the diaphragm, eye and skeletal muscle. Expressed in neuronal cells of all brain regions. Very low expression, if any, in glial cells.

It localises to the membrane. Its subcellular location is the nucleus envelope. May be an angiogenesis inhibitor. This chain is Tenomodulin (Tnmd), found in Mus musculus (Mouse).